Here is a 198-residue protein sequence, read N- to C-terminus: Recombination protein RecR (198 aa).

Residues 57-72 (CSICGRLTDDDPCSIC) form a C4-type zinc finger. The region spanning 80–175 (TTILVLEDSR…KVTRLARGLA (96 aa)) is the Toprim domain.

Belongs to the RecR family.

Functionally, may play a role in DNA repair. It seems to be involved in an RecBC-independent recombinational process of DNA repair. It may act with RecF and RecO. In Streptococcus pneumoniae (strain 70585), this protein is Recombination protein RecR.